We begin with the raw amino-acid sequence, 158 residues long: 6,7-dimethyl-8-ribityllumazine synthase (158 aa).

Residues Phe22, 57 to 59 (AYE), and 84 to 86 (TVI) contribute to the 5-amino-6-(D-ribitylamino)uracil site. 89-90 (GT) provides a ligand contact to (2S)-2-hydroxy-3-oxobutyl phosphate. Catalysis depends on His92, which acts as the Proton donor. Phe117 provides a ligand contact to 5-amino-6-(D-ribitylamino)uracil. Arg131 contributes to the (2S)-2-hydroxy-3-oxobutyl phosphate binding site.

The protein belongs to the DMRL synthase family. In terms of assembly, forms an icosahedral capsid composed of 60 subunits, arranged as a dodecamer of pentamers.

The enzyme catalyses (2S)-2-hydroxy-3-oxobutyl phosphate + 5-amino-6-(D-ribitylamino)uracil = 6,7-dimethyl-8-(1-D-ribityl)lumazine + phosphate + 2 H2O + H(+). The protein operates within cofactor biosynthesis; riboflavin biosynthesis; riboflavin from 2-hydroxy-3-oxobutyl phosphate and 5-amino-6-(D-ribitylamino)uracil: step 1/2. Functionally, catalyzes the formation of 6,7-dimethyl-8-ribityllumazine by condensation of 5-amino-6-(D-ribitylamino)uracil with 3,4-dihydroxy-2-butanone 4-phosphate. This is the penultimate step in the biosynthesis of riboflavin. The sequence is that of 6,7-dimethyl-8-ribityllumazine synthase from Pectobacterium atrosepticum (strain SCRI 1043 / ATCC BAA-672) (Erwinia carotovora subsp. atroseptica).